The sequence spans 504 residues: Maturase K (504 aa).

Belongs to the intron maturase 2 family. MatK subfamily.

The protein resides in the plastid. Its subcellular location is the chloroplast. Its function is as follows. Usually encoded in the trnK tRNA gene intron. Probably assists in splicing its own and other chloroplast group II introns. The chain is Maturase K from Chimaphila umbellata (Pipsissewa).